The chain runs to 26 residues: DEAD-box ATP-dependent RNA helicase 1 (26 aa).

The Q motif motif lies at 1–10; it reads RELLMGIFEK. 11 to 16 contributes to the ATP binding site; the sequence is NGTGKT. The region spanning 11-26 is the Helicase ATP-binding domain; sequence NGTGKTAAFVIPLLQK.

It belongs to the DEAD box helicase family. DDX6/DHH1 subfamily.

The protein resides in the cytoplasm. Its subcellular location is the P-body. The enzyme catalyses ATP + H2O = ADP + phosphate + H(+). In terms of biological role, ATP-dependent RNA helicase involved in mRNA turnover, and more specifically in mRNA decapping. The polypeptide is DEAD-box ATP-dependent RNA helicase 1 (Catharanthus roseus (Madagascar periwinkle)).